The primary structure comprises 191 residues: Neurotrophic factor BDNF precursor form (191 aa).

The segment at 1–23 is disordered; it reads GQGSLAYPGLRTQGNLETLGGPN. Positions 1-100 are excised as a propeptide; it reads GQGSLAYPGL…AANMSMRVRR (100 aa). A glycan (N-linked (GlcNAc...) asparagine) is linked at Asn93. A disulfide bridge connects residues Cys113 and Cys180.

Belongs to the NGF-beta family.

Its subcellular location is the secreted. Functionally, promotes the survival of neuronal populations that are all located either in the central nervous system or directly connected to it. The protein is Neurotrophic factor BDNF precursor form (BDNF) of Anilius scytale (Coral cylinder snake).